Consider the following 603-residue polypeptide: Elongation factor 4 (603 aa).

The 183-residue stretch at 2 to 184 (NHIRNFSIIA…AVVARMPPPR (183 aa)) folds into the tr-type G domain. Residues 14–19 (DHGKST) and 131–134 (NKMD) contribute to the GTP site.

This sequence belongs to the TRAFAC class translation factor GTPase superfamily. Classic translation factor GTPase family. LepA subfamily.

The protein localises to the cell inner membrane. It catalyses the reaction GTP + H2O = GDP + phosphate + H(+). Functionally, required for accurate and efficient protein synthesis under certain stress conditions. May act as a fidelity factor of the translation reaction, by catalyzing a one-codon backward translocation of tRNAs on improperly translocated ribosomes. Back-translocation proceeds from a post-translocation (POST) complex to a pre-translocation (PRE) complex, thus giving elongation factor G a second chance to translocate the tRNAs correctly. Binds to ribosomes in a GTP-dependent manner. This chain is Elongation factor 4, found in Albidiferax ferrireducens (strain ATCC BAA-621 / DSM 15236 / T118) (Rhodoferax ferrireducens).